The chain runs to 477 residues: Endoglucanase A (477 aa).

An N-terminal signal peptide occupies residues 1 to 32 (MKNVKKRVGVVLLILAVLGVYMLAMPANTVSA). Glu95 functions as the Proton donor in the catalytic mechanism. Asp152 acts as the Nucleophile in catalysis. In terms of domain architecture, Dockerin spans 411 to 477 (PQVVYGDVNG…LIKSIPHLPY (67 aa)).

The protein belongs to the glycosyl hydrolase 8 (cellulase D) family.

The catalysed reaction is Endohydrolysis of (1-&gt;4)-beta-D-glucosidic linkages in cellulose, lichenin and cereal beta-D-glucans.. In terms of biological role, this enzyme catalyzes the endohydrolysis of 1,4-beta-glucosidic linkages in cellulose, lichenin and cereal beta-D-glucans. The polypeptide is Endoglucanase A (celA) (Acetivibrio thermocellus (strain ATCC 27405 / DSM 1237 / JCM 9322 / NBRC 103400 / NCIMB 10682 / NRRL B-4536 / VPI 7372) (Clostridium thermocellum)).